Reading from the N-terminus, the 393-residue chain is Fractalkine (393 aa).

A signal peptide spans 1-24 (MAPSQLAWLLRLAAFFHLCTLLAG). The chemokine and involved in interaction with ITGAV:ITGB3 and ITGA4:ITGB1 stretch occupies residues 25 to 100 (QHLGMTKCNI…HQTAALTRNG (76 aa)). Over 25–337 (QHLGMTKCNI…PDSQAATRRQ (313 aa)) the chain is Extracellular. Intrachain disulfides connect cysteine 32–cysteine 58 and cysteine 36–cysteine 74. Asparagine 33 carries N-linked (GlcNAc...) asparagine glycosylation. Positions 101–337 (GKFEKRVDNV…PDSQAATRRQ (237 aa)) are mucin-like stalk. 2 disordered regions span residues 114–184 (ITSA…PQST) and 213–303 (EKAT…SGSQ). Composition is skewed to polar residues over residues 153-172 (GTSQEPPAAVTGSSPSTSKA) and 223-240 (ALSTQASTTSSPKQNVGS). Residues 338 to 358 (AVGLLAFLGLLFCLGVAMFAY) form a helical membrane-spanning segment. Residues 359–393 (QSLQGCPRKMAGEMVEGLRYVPRSCGSNSYVLVPV) are Cytoplasmic-facing.

The protein belongs to the intercrine delta family. Monomer. Forms a ternary complex with CX3CR1 and ITGAV:ITGB3 or ITGA4:ITGB1. Post-translationally, a soluble short form may be released by proteolytic cleavage from the long membrane-anchored form. As to expression, highest levels in brain (neurons). Significant levels in kidney, heart, lung and adrenal gland.

It localises to the cell membrane. It is found in the secreted. Functionally, chemokine that acts as a ligand for both CX3CR1 and integrins ITGAV:ITGB3 and ITGA4:ITGB1. The CX3CR1-CX3CL1 signaling exerts distinct functions in different tissue compartments, such as immune response, inflammation, cell adhesion and chemotaxis. Regulates leukocyte adhesion and migration processes at the endothelium. Can activate integrins in both a CX3CR1-dependent and CX3CR1-independent manner. In the presence of CX3CR1, activates integrins by binding to the classical ligand-binding site (site 1) in integrins. In the absence of CX3CR1, binds to a second site (site 2) in integrins which is distinct from site 1 and enhances the binding of other integrin ligands to site 1. Its function is as follows. The soluble form is chemotactic for T-cells and monocytes, but not for neutrophils. The membrane-bound form promotes adhesion of those leukocytes to endothelial cells. The polypeptide is Fractalkine (Cx3cl1) (Rattus norvegicus (Rat)).